The sequence spans 209 residues: Uracil phosphoribosyltransferase (209 aa).

5-phospho-alpha-D-ribose 1-diphosphate is bound by residues R79, R104, and 131 to 139 (DPMLATGGS). Uracil is bound by residues I194 and 199-201 (GDA). Position 200 (D200) interacts with 5-phospho-alpha-D-ribose 1-diphosphate.

It belongs to the UPRTase family. It depends on Mg(2+) as a cofactor.

The catalysed reaction is UMP + diphosphate = 5-phospho-alpha-D-ribose 1-diphosphate + uracil. It participates in pyrimidine metabolism; UMP biosynthesis via salvage pathway; UMP from uracil: step 1/1. Allosterically activated by GTP. Catalyzes the conversion of uracil and 5-phospho-alpha-D-ribose 1-diphosphate (PRPP) to UMP and diphosphate. This chain is Uracil phosphoribosyltransferase, found in Latilactobacillus sakei (Lactobacillus sakei).